Consider the following 179-residue polypeptide: Plasmid-derived single-stranded DNA-binding protein (179 aa).

Residues 6–110 (INKVILVGRL…ILVKTTGTMQ (105 aa)) form the SSB domain. The DNA-binding element occupies 55–61 (WHRVVLF). Positions 117–179 (GAQTQPEEGQ…DYGFSDDIPF (63 aa)) are disordered. A compositionally biased stretch (polar residues) spans 118–132 (AQTQPEEGQQFSGQP). Basic residues predominate over residues 145-155 (GGAKTKGRGRK). Residues 167 to 179 (EGDDYGFSDDIPF) show a composition bias toward acidic residues.

In terms of assembly, homotetramer.

Its function is as follows. May contribute to the conjugative processing of DNA. It has a functional relationship with Psi (plasmid-mediated sos inhibition) proteins. This is Plasmid-derived single-stranded DNA-binding protein (ssbF) from Escherichia coli (strain K12).